A 233-amino-acid chain; its full sequence is Ribonuclease 3 (233 aa).

Residues 5 to 127 (LERLCRKLGY…VIGAVYLDGG (123 aa)) form the RNase III domain. Glu40 is a Mg(2+) binding site. The active site involves Asp44. Residues Asp113 and Glu116 each contribute to the Mg(2+) site. The active site involves Glu116. One can recognise a DRBM domain in the interval 156–226 (DPKTRLQEYL…ATRALALLLA (71 aa)).

This sequence belongs to the ribonuclease III family. As to quaternary structure, homodimer. The cofactor is Mg(2+).

The protein resides in the cytoplasm. It carries out the reaction Endonucleolytic cleavage to 5'-phosphomonoester.. Functionally, digests double-stranded RNA. Involved in the processing of primary rRNA transcript to yield the immediate precursors to the large and small rRNAs (23S and 16S). Processes some mRNAs, and tRNAs when they are encoded in the rRNA operon. Processes pre-crRNA and tracrRNA of type II CRISPR loci if present in the organism. The protein is Ribonuclease 3 of Nitrosococcus oceani (strain ATCC 19707 / BCRC 17464 / JCM 30415 / NCIMB 11848 / C-107).